A 619-amino-acid chain; its full sequence is 2-succinyl-5-enolpyruvyl-6-hydroxy-3-cyclohexene-1-carboxylate synthase (619 aa).

Polar residues predominate over residues 385–398 (SSAHQSLAATNSDS). Positions 385-415 (SSAHQSLAATNSDSSTDDIIENTDEEGSNES) are disordered. Acidic residues predominate over residues 399 to 413 (STDDIIENTDEEGSN).

The protein belongs to the TPP enzyme family. MenD subfamily. In terms of assembly, homodimer. Mg(2+) serves as cofactor. Requires Mn(2+) as cofactor. It depends on thiamine diphosphate as a cofactor.

It catalyses the reaction isochorismate + 2-oxoglutarate + H(+) = 5-enolpyruvoyl-6-hydroxy-2-succinyl-cyclohex-3-ene-1-carboxylate + CO2. Its pathway is quinol/quinone metabolism; 1,4-dihydroxy-2-naphthoate biosynthesis; 1,4-dihydroxy-2-naphthoate from chorismate: step 2/7. It functions in the pathway quinol/quinone metabolism; menaquinone biosynthesis. In terms of biological role, catalyzes the thiamine diphosphate-dependent decarboxylation of 2-oxoglutarate and the subsequent addition of the resulting succinic semialdehyde-thiamine pyrophosphate anion to isochorismate to yield 2-succinyl-5-enolpyruvyl-6-hydroxy-3-cyclohexene-1-carboxylate (SEPHCHC). This Haloquadratum walsbyi (strain DSM 16790 / HBSQ001) protein is 2-succinyl-5-enolpyruvyl-6-hydroxy-3-cyclohexene-1-carboxylate synthase.